The primary structure comprises 462 residues: MDAYLLLDFGSTYTKLTAVDIENEGILATAKDITTIESDIMVGFNKAYEKLTEQLEGKEVNFVKKLACSSAAGGLKMIAIGLVPELTAEAAKRAALGAGARVLNVYSYDLTNKEVEEIKNSNLDIILLAGGTDGGNKECMIHNAKMLAEHGVKLPIVVAGNKVVSDEVSEIFDKAGIFYRVTENVMPKLNTLNVEPAREEIRQIFMKKIVEAKGMSNAESFINGILMPTPAAVLKAARVLAEGTDKEDGIGDLIVVDIGGATTDVHSLADGEPSKPGVTLRGLEEPFAKRTVEGDLGMRYSAISLWEASGTRKLQKYLCDNTVDVEACCKYRAEHIKMVPETEEEIKFDEAMAKVATDMAMERHVGVIESMYTPMGVIYSQIGKDLLNVKCVIGTGGVLVHSKNPGEILKAGSFDMADATHLKPQHPEYYIDKTYILSAMGLLAEDLPDKAVRIMKKYLVKV.

Functionally, may play a role in glutamate fermentation. The protein is Protein MutL (mutL) of Clostridium tetanomorphum.